The primary structure comprises 277 residues: Small ribosomal subunit protein uS2 (277 aa).

2 stretches are compositionally biased toward basic and acidic residues: residues 227–256 (QARAERQEAAAKEAAGDADKAPAEAERTEA) and 267–277 (SEAKAEGNTEA). The interval 227-277 (QARAERQEAAAKEAAGDADKAPAEAERTEAPAEEAPAEAQSEAKAEGNTEA) is disordered.

Belongs to the universal ribosomal protein uS2 family.

This is Small ribosomal subunit protein uS2 from Corynebacterium jeikeium (strain K411).